Reading from the N-terminus, the 1413-residue chain is DNA-directed RNA polymerase subunit beta' (1413 aa).

Zn(2+) contacts are provided by cysteine 70, cysteine 72, cysteine 85, and cysteine 88. 3 residues coordinate Mg(2+): aspartate 460, aspartate 462, and aspartate 464. Residues cysteine 814, cysteine 888, cysteine 895, and cysteine 898 each coordinate Zn(2+).

It belongs to the RNA polymerase beta' chain family. As to quaternary structure, the RNAP catalytic core consists of 2 alpha, 1 beta, 1 beta' and 1 omega subunit. When a sigma factor is associated with the core the holoenzyme is formed, which can initiate transcription. The cofactor is Mg(2+). Requires Zn(2+) as cofactor.

The enzyme catalyses RNA(n) + a ribonucleoside 5'-triphosphate = RNA(n+1) + diphosphate. In terms of biological role, DNA-dependent RNA polymerase catalyzes the transcription of DNA into RNA using the four ribonucleoside triphosphates as substrates. The sequence is that of DNA-directed RNA polymerase subunit beta' from Bordetella avium (strain 197N).